The following is a 127-amino-acid chain: Large ribosomal subunit protein bL12 (127 aa).

Belongs to the bacterial ribosomal protein bL12 family. As to quaternary structure, homodimer. Part of the ribosomal stalk of the 50S ribosomal subunit. Forms a multimeric L10(L12)X complex, where L10 forms an elongated spine to which 2 to 4 L12 dimers bind in a sequential fashion. Binds GTP-bound translation factors.

In terms of biological role, forms part of the ribosomal stalk which helps the ribosome interact with GTP-bound translation factors. Is thus essential for accurate translation. The polypeptide is Large ribosomal subunit protein bL12 (Streptomyces virginiae (Streptomyces cinnamonensis)).